The following is a 340-amino-acid chain: Glycerol-3-phosphate dehydrogenase [NAD(P)+] (340 aa).

4 residues coordinate NADPH: Ser14, Phe15, Arg35, and Lys108. Sn-glycerol 3-phosphate-binding residues include Lys108 and Gly136. Ala140 provides a ligand contact to NADPH. Residues Lys191, Asp244, Ser254, Arg255, and Asn256 each coordinate sn-glycerol 3-phosphate. The active-site Proton acceptor is the Lys191. Residue Arg255 coordinates NADPH. Residue Glu281 participates in NADPH binding.

It belongs to the NAD-dependent glycerol-3-phosphate dehydrogenase family.

Its subcellular location is the cytoplasm. It carries out the reaction sn-glycerol 3-phosphate + NAD(+) = dihydroxyacetone phosphate + NADH + H(+). It catalyses the reaction sn-glycerol 3-phosphate + NADP(+) = dihydroxyacetone phosphate + NADPH + H(+). It participates in membrane lipid metabolism; glycerophospholipid metabolism. Its function is as follows. Catalyzes the reduction of the glycolytic intermediate dihydroxyacetone phosphate (DHAP) to sn-glycerol 3-phosphate (G3P), the key precursor for phospholipid synthesis. The protein is Glycerol-3-phosphate dehydrogenase [NAD(P)+] of Pseudomonas paraeruginosa (strain DSM 24068 / PA7) (Pseudomonas aeruginosa (strain PA7)).